The following is a 476-amino-acid chain: Ribulose bisphosphate carboxylase large chain (476 aa).

Residues N124 and T174 each contribute to the substrate site. K176 (proton acceptor) is an active-site residue. Residue K178 coordinates substrate. Positions 202, 204, and 205 each coordinate Mg(2+). K202 carries the N6-carboxylysine modification. The active-site Proton acceptor is H295. Residues R296, H328, and S380 each contribute to the substrate site.

The protein belongs to the RuBisCO large chain family. Type I subfamily. Heterohexadecamer of 8 large chains and 8 small chains; disulfide-linked. The disulfide link is formed within the large subunit homodimers. Forms complexes of many stoichiometries with Raf1 with and without RbcS. RuBisCO interacts with the C-terminus of CcmM. The cofactor is Mg(2+). Post-translationally, the disulfide bond which can form in the large chain dimeric partners within the hexadecamer appears to be associated with oxidative stress and protein turnover.

The protein resides in the carboxysome. The catalysed reaction is 2 (2R)-3-phosphoglycerate + 2 H(+) = D-ribulose 1,5-bisphosphate + CO2 + H2O. It carries out the reaction D-ribulose 1,5-bisphosphate + O2 = 2-phosphoglycolate + (2R)-3-phosphoglycerate + 2 H(+). RuBisCO catalyzes two reactions: the carboxylation of D-ribulose 1,5-bisphosphate, the primary event in carbon dioxide fixation, as well as the oxidative fragmentation of the pentose substrate in the photorespiration process. Both reactions occur simultaneously and in competition at the same active site. The chain is Ribulose bisphosphate carboxylase large chain from Nostoc sp. (strain PCC 7120 / SAG 25.82 / UTEX 2576).